The chain runs to 257 residues: Thiazole synthase (257 aa).

K100 acts as the Schiff-base intermediate with DXP in catalysis. 1-deoxy-D-xylulose 5-phosphate is bound by residues G161, 187–188 (AG), and 209–210 (NT).

This sequence belongs to the ThiG family. Homotetramer. Forms heterodimers with either ThiH or ThiS.

The protein localises to the cytoplasm. The catalysed reaction is [ThiS sulfur-carrier protein]-C-terminal-Gly-aminoethanethioate + 2-iminoacetate + 1-deoxy-D-xylulose 5-phosphate = [ThiS sulfur-carrier protein]-C-terminal Gly-Gly + 2-[(2R,5Z)-2-carboxy-4-methylthiazol-5(2H)-ylidene]ethyl phosphate + 2 H2O + H(+). It functions in the pathway cofactor biosynthesis; thiamine diphosphate biosynthesis. Functionally, catalyzes the rearrangement of 1-deoxy-D-xylulose 5-phosphate (DXP) to produce the thiazole phosphate moiety of thiamine. Sulfur is provided by the thiocarboxylate moiety of the carrier protein ThiS. In vitro, sulfur can be provided by H(2)S. This is Thiazole synthase from Zymomonas mobilis subsp. mobilis (strain ATCC 31821 / ZM4 / CP4).